The chain runs to 292 residues: Elongation factor Ts (292 aa).

Positions 79–82 are involved in Mg(2+) ion dislocation from EF-Tu; that stretch reads TDFV.

It belongs to the EF-Ts family.

The protein resides in the cytoplasm. Its function is as follows. Associates with the EF-Tu.GDP complex and induces the exchange of GDP to GTP. It remains bound to the aminoacyl-tRNA.EF-Tu.GTP complex up to the GTP hydrolysis stage on the ribosome. The protein is Elongation factor Ts of Staphylococcus epidermidis (strain ATCC 12228 / FDA PCI 1200).